The sequence spans 178 residues: Probable coatomer subunit zeta-B (178 aa).

It belongs to the adaptor complexes small subunit family. Oligomeric complex that consists of at least the alpha, beta, beta', gamma, delta, epsilon and zeta subunits.

It localises to the cytoplasm. Its subcellular location is the golgi apparatus membrane. It is found in the cytoplasmic vesicle. The protein localises to the COPI-coated vesicle membrane. The coatomer is a cytosolic protein complex that binds to dilysine motifs and reversibly associates with Golgi non-clathrin-coated vesicles, which further mediate biosynthetic protein transport from the ER, via the Golgi up to the trans Golgi network. Coatomer complex is required for budding from Golgi membranes, and is essential for the retrograde Golgi-to-ER transport of dilysine-tagged proteins. The zeta subunit may be involved in regulating the coat assembly and, hence, the rate of biosynthetic protein transport due to its association-dissociation properties with the coatomer complex. The sequence is that of Probable coatomer subunit zeta-B (copZb) from Dictyostelium discoideum (Social amoeba).